Here is a 361-residue protein sequence, read N- to C-terminus: UDP-3-O-acylglucosamine N-acyltransferase (361 aa).

His-253 acts as the Proton acceptor in catalysis.

This sequence belongs to the transferase hexapeptide repeat family. LpxD subfamily. In terms of assembly, homotrimer.

The enzyme catalyses a UDP-3-O-[(3R)-3-hydroxyacyl]-alpha-D-glucosamine + a (3R)-hydroxyacyl-[ACP] = a UDP-2-N,3-O-bis[(3R)-3-hydroxyacyl]-alpha-D-glucosamine + holo-[ACP] + H(+). It participates in bacterial outer membrane biogenesis; LPS lipid A biosynthesis. Its function is as follows. Catalyzes the N-acylation of UDP-3-O-acylglucosamine using 3-hydroxyacyl-ACP as the acyl donor. Is involved in the biosynthesis of lipid A, a phosphorylated glycolipid that anchors the lipopolysaccharide to the outer membrane of the cell. In Burkholderia mallei (strain ATCC 23344), this protein is UDP-3-O-acylglucosamine N-acyltransferase.